A 102-amino-acid chain; its full sequence is Putative pterin-4-alpha-carbinolamine dehydratase (102 aa).

The protein belongs to the pterin-4-alpha-carbinolamine dehydratase family.

The enzyme catalyses (4aS,6R)-4a-hydroxy-L-erythro-5,6,7,8-tetrahydrobiopterin = (6R)-L-erythro-6,7-dihydrobiopterin + H2O. The polypeptide is Putative pterin-4-alpha-carbinolamine dehydratase (Burkholderia ambifaria (strain ATCC BAA-244 / DSM 16087 / CCUG 44356 / LMG 19182 / AMMD) (Burkholderia cepacia (strain AMMD))).